Consider the following 468-residue polypeptide: 3-isopropylmalate dehydratase large subunit (468 aa).

[4Fe-4S] cluster-binding residues include Cys-346, Cys-406, and Cys-409.

The protein belongs to the aconitase/IPM isomerase family. LeuC type 1 subfamily. In terms of assembly, heterodimer of LeuC and LeuD. It depends on [4Fe-4S] cluster as a cofactor.

The catalysed reaction is (2R,3S)-3-isopropylmalate = (2S)-2-isopropylmalate. Its pathway is amino-acid biosynthesis; L-leucine biosynthesis; L-leucine from 3-methyl-2-oxobutanoate: step 2/4. Its function is as follows. Catalyzes the isomerization between 2-isopropylmalate and 3-isopropylmalate, via the formation of 2-isopropylmaleate. The chain is 3-isopropylmalate dehydratase large subunit from Cyanothece sp. (strain PCC 7425 / ATCC 29141).